The primary structure comprises 336 residues: Ribosomal RNA large subunit methyltransferase F (336 aa).

This sequence belongs to the methyltransferase superfamily. METTL16/RlmF family.

The protein localises to the cytoplasm. It catalyses the reaction adenosine(1618) in 23S rRNA + S-adenosyl-L-methionine = N(6)-methyladenosine(1618) in 23S rRNA + S-adenosyl-L-homocysteine + H(+). Specifically methylates the adenine in position 1618 of 23S rRNA. This chain is Ribosomal RNA large subunit methyltransferase F, found in Yersinia pestis bv. Antiqua (strain Angola).